A 474-amino-acid chain; its full sequence is Glutamate--tRNA ligase (474 aa).

Residues 9-19 carry the 'HIGH' region motif; sequence PSPTGYLHVGG. Positions 240–244 match the 'KMSKS' region motif; that stretch reads KLSKR. K243 contacts ATP.

Belongs to the class-I aminoacyl-tRNA synthetase family. Glutamate--tRNA ligase type 1 subfamily. As to quaternary structure, monomer.

The protein localises to the cytoplasm. The catalysed reaction is tRNA(Glu) + L-glutamate + ATP = L-glutamyl-tRNA(Glu) + AMP + diphosphate. In terms of biological role, catalyzes the attachment of glutamate to tRNA(Glu) in a two-step reaction: glutamate is first activated by ATP to form Glu-AMP and then transferred to the acceptor end of tRNA(Glu). This chain is Glutamate--tRNA ligase, found in Vibrio parahaemolyticus serotype O3:K6 (strain RIMD 2210633).